Consider the following 258-residue polypeptide: Coiled-coil domain-containing protein 127 (258 aa).

The stretch at 50 to 170 (KEIEKEKEAC…EEALAERQSI (121 aa)) forms a coiled coil.

The polypeptide is Coiled-coil domain-containing protein 127 (CCDC127) (Sus scrofa (Pig)).